An 847-amino-acid polypeptide reads, in one-letter code: A-kinase anchor protein 4 (847 aa).

A propeptide spanning residues 1–187 is cleaved from the precursor; the sequence is MIAYCGTTKM…MAASKNTNNN (187 aa). A phosphoserine mark is found at S95, S129, S189, and S203. The segment covering 182–204 has biased composition (polar residues); it reads KNTNNNQSPSNPATKSPSNQRSV. Positions 182-209 are disordered; that stretch reads KNTNNNQSPSNPATKSPSNQRSVATPDG. Residue T206 is modified to Phosphothreonine. Phosphoserine occurs at positions 212, 225, and 270. The tract at residues 218-231 is interaction with Prkar1a and Prkar2a; it reads YYVNRLSSLVIQMA. A Phosphotyrosine modification is found at Y300. S301, S304, S340, S430, S441, S443, S462, S491, S496, and S503 each carry phosphoserine. The interval 334-343 is PKA-RI subunit binding domain; it reads YANQVASDMM. Position 505 is a phosphothreonine (T505). Residues 511 to 536 form a disordered region; the sequence is KQGTQGRVPNKVCPSKDEKREKISPS. Basic and acidic residues predominate over residues 524-533; the sequence is PSKDEKREKI. Phosphoserine occurs at positions 536 and 581. A disordered region spans residues 583 to 613; sequence QYEKSGGGQSSKSLSMKHFESRGAPGPSTCA. Phosphoserine is present on residues S626, S631, S648, S650, S674, S677, S700, and S729. The interval 655 to 677 is disordered; that stretch reads CCDSRSKQAAPVAKRPEDQSQDS.

It belongs to the AKAP110 family. In terms of assembly, interacts with PRKAR1A and PRKAR2A. Interacts with ENO4. Interacts with QRICH2. Post-translationally, phosphorylated by STK33 during sperm flagella assembly. As to expression, expressed in flagella of epididymal sperm.

It is found in the cell projection. It localises to the cilium. The protein localises to the flagellum. Major structural component of sperm fibrous sheath. May play a role in sperm motility. The protein is A-kinase anchor protein 4 of Rattus norvegicus (Rat).